A 158-amino-acid chain; its full sequence is Sec-independent protein translocase protein TatB (158 aa).

Residues 1–21 (MFGISFSELLLVGLVALLVLG) form a helical membrane-spanning segment. The segment at 73–158 (DEARKMFAPN…HDSSLPPRAP (86 aa)) is disordered. Over residues 80 to 90 (APNQPSENSPE) the composition is skewed to low complexity.

Belongs to the TatB family. As to quaternary structure, the Tat system comprises two distinct complexes: a TatABC complex, containing multiple copies of TatA, TatB and TatC subunits, and a separate TatA complex, containing only TatA subunits. Substrates initially bind to the TatABC complex, which probably triggers association of the separate TatA complex to form the active translocon.

The protein resides in the cell inner membrane. Its function is as follows. Part of the twin-arginine translocation (Tat) system that transports large folded proteins containing a characteristic twin-arginine motif in their signal peptide across membranes. Together with TatC, TatB is part of a receptor directly interacting with Tat signal peptides. TatB may form an oligomeric binding site that transiently accommodates folded Tat precursor proteins before their translocation. This Pseudomonas syringae pv. syringae (strain B728a) protein is Sec-independent protein translocase protein TatB.